Reading from the N-terminus, the 512-residue chain is Spastin homolog (512 aa).

The Cytoplasmic portion of the chain corresponds to 1–274; sequence MFAFSKGPAG…FKGLRQPVKG (274 aa). Residues 32–97 adopt a coiled-coil conformation; sequence IEMDELTKHA…MKLEKSAQDR (66 aa). A disordered region spans residues 110–182; it reads KQSRSATVGP…SDTVHPEPPV (73 aa). Residues 115 to 233 form an MTBD region; sequence ATVGPSRPAS…ERLLDEVLDN (119 aa). The span at 137-163 shows a compositional bias: basic and acidic residues; it reads APEKKNAAKAKENDENRHVCSRGDRCG. The helical intramembrane region spans 275-294; the sequence is ILLFGPPGNGKTLLAKAVAG. 279–286 contributes to the ATP binding site; it reads GPPGNGKT. The Cytoplasmic portion of the chain corresponds to 295-512; the sequence is ESKQMFFNIS…LSDFSRSFGC (218 aa).

This sequence belongs to the AAA ATPase family. Spastin subfamily. Homohexamer. The homohexamer is stabilized by ATP-binding. The homohexamer may adopt a ring conformation through which microtubules pass prior to being severed. Interacts with microtubules. Interacts (via N-terminus) with tubulin; the interaction is direct.

Its subcellular location is the membrane. The protein resides in the cytoplasm. It localises to the cytoskeleton. The protein localises to the perinuclear region. The catalysed reaction is n ATP + n H2O + a microtubule = n ADP + n phosphate + (n+1) alpha/beta tubulin heterodimers.. Its function is as follows. ATP-dependent microtubule severing protein that specifically recognizes and cuts microtubules. Probably by regulating microtubule remodeling, plays a role in new synapse formation in GABAergic DD (Dorsal D type) neurons. The protein is Spastin homolog of Caenorhabditis elegans.